Consider the following 145-residue polypeptide: Maximins 3/H3 type 2 (145 aa).

Positions 1-18 (MNFKYIVAVSFLIASAYA) are cleaved as a signal peptide. 2 propeptides span residues 19-43 (RSVQ…LREI) and 74-124 (RTAE…KEKR). At isoleucine 144 the chain carries Isoleucine amide.

Belongs to the bombinin family. In terms of tissue distribution, expressed by the skin glands.

The protein localises to the secreted. In terms of biological role, maximin-3 shows antibacterial activity against both Gram-positive and Gram-negative bacteria. It also shows antimicrobial activity against the fungus C.albicans, but not against A.flavus nor P.uticale. It has little hemolytic activity. It possess a significant cytotoxicity against tumor cell lines. It possess a significant anti-HIV activity. It shows high spermicidal activity. Functionally, maximin-H3 shows antibacterial activity against both Gram-positive and Gram-negative bacteria. It also shows antimicrobial activity against the fungus C.albicans. Shows strong hemolytic activity. This chain is Maximins 3/H3 type 2, found in Bombina maxima (Giant fire-bellied toad).